The following is a 372-amino-acid chain: NAD(P)H-quinone oxidoreductase subunit 1 (372 aa).

8 helical membrane passes run 29–49 (WLPF…LVTV), 97–117 (LLFT…YLVV), 128–148 (LGVA…GLLM), 176–196 (LALA…IDIV), 204–224 (ILGW…IAVL), 254–274 (FALY…LVAV), 308–328 (TLGI…AVLL), and 351–371 (VALV…FAFG).

This sequence belongs to the complex I subunit 1 family. NDH-1 is composed of at least 11 different subunits.

It localises to the cellular thylakoid membrane. The enzyme catalyses a plastoquinone + NADH + (n+1) H(+)(in) = a plastoquinol + NAD(+) + n H(+)(out). The catalysed reaction is a plastoquinone + NADPH + (n+1) H(+)(in) = a plastoquinol + NADP(+) + n H(+)(out). Its function is as follows. NDH-1 shuttles electrons from an unknown electron donor, via FMN and iron-sulfur (Fe-S) centers, to quinones in the respiratory and/or the photosynthetic chain. The immediate electron acceptor for the enzyme in this species is believed to be plastoquinone. Couples the redox reaction to proton translocation, and thus conserves the redox energy in a proton gradient. In Trichodesmium erythraeum (strain IMS101), this protein is NAD(P)H-quinone oxidoreductase subunit 1.